A 227-amino-acid chain; its full sequence is Uracil-DNA glycosylase (227 aa).

The active-site Proton acceptor is the D64.

It belongs to the uracil-DNA glycosylase (UDG) superfamily. UNG family.

It is found in the cytoplasm. It carries out the reaction Hydrolyzes single-stranded DNA or mismatched double-stranded DNA and polynucleotides, releasing free uracil.. Excises uracil residues from the DNA which can arise as a result of misincorporation of dUMP residues by DNA polymerase or due to deamination of cytosine. This Erwinia tasmaniensis (strain DSM 17950 / CFBP 7177 / CIP 109463 / NCPPB 4357 / Et1/99) protein is Uracil-DNA glycosylase.